We begin with the raw amino-acid sequence, 83 residues long: Cell division protein ZapB (83 aa).

Positions 7-80 form a coiled coil; it reads EMLEKLEAKV…RVRTLLGKMD (74 aa).

This sequence belongs to the ZapB family. In terms of assembly, homodimer. The ends of the coiled-coil dimer bind to each other, forming polymers. Interacts with FtsZ.

It localises to the cytoplasm. Its function is as follows. Non-essential, abundant cell division factor that is required for proper Z-ring formation. It is recruited early to the divisome by direct interaction with FtsZ, stimulating Z-ring assembly and thereby promoting cell division earlier in the cell cycle. Its recruitment to the Z-ring requires functional FtsA or ZipA. This Photobacterium profundum (strain SS9) protein is Cell division protein ZapB.